Consider the following 70-residue polypeptide: MIGRLIILLARAWQMGPSLVLPPTCRYVPSCSAYTIEAVSRYGALKGGWLGFRRICRCHPWGGSGFDPVP.

It belongs to the UPF0161 family.

It localises to the cell inner membrane. In terms of biological role, could be involved in insertion of integral membrane proteins into the membrane. The sequence is that of Putative membrane protein insertion efficiency factor from Rhizorhabdus wittichii (strain DSM 6014 / CCUG 31198 / JCM 15750 / NBRC 105917 / EY 4224 / RW1) (Sphingomonas wittichii).